The sequence spans 524 residues: 2-isopropylmalate synthase (524 aa).

The Pyruvate carboxyltransferase domain maps to 15–275 (VVVFDTTMRD…PYGTSVDPVH (261 aa)). Mn(2+)-binding residues include Asp24, His212, His214, and Asn248. A regulatory domain region spans residues 401–524 (RVSRLRVVAG…RPEAAIASGF (124 aa)).

This sequence belongs to the alpha-IPM synthase/homocitrate synthase family. LeuA type 1 subfamily. Homodimer. Mn(2+) serves as cofactor.

Its subcellular location is the cytoplasm. It catalyses the reaction 3-methyl-2-oxobutanoate + acetyl-CoA + H2O = (2S)-2-isopropylmalate + CoA + H(+). It participates in amino-acid biosynthesis; L-leucine biosynthesis; L-leucine from 3-methyl-2-oxobutanoate: step 1/4. In terms of biological role, catalyzes the condensation of the acetyl group of acetyl-CoA with 3-methyl-2-oxobutanoate (2-ketoisovalerate) to form 3-carboxy-3-hydroxy-4-methylpentanoate (2-isopropylmalate). The chain is 2-isopropylmalate synthase from Caulobacter vibrioides (strain ATCC 19089 / CIP 103742 / CB 15) (Caulobacter crescentus).